The following is a 229-amino-acid chain: Zinc finger matrin-type protein 4 (229 aa).

Matrin-type zinc fingers lie at residues 14–44, 72–106, 145–175, and 198–228; these read SYCKVCSAQLISESQRVAHYESRKHASKVRL, DKNKCCTLCNMSFTSAVVADSHYQGKIHAKRLKLL, RYCGLCAAWFNNPLMAQQHYEGKKHKKNAAR, and YRCTTCSVSLNSIEQYHAHLQGSKHQTNLKN.

The protein resides in the nucleus. In Mus musculus (Mouse), this protein is Zinc finger matrin-type protein 4 (Zmat4).